A 256-amino-acid chain; its full sequence is Nuclear shuttle protein (256 aa).

Positions 1–16 are enriched in polar residues; the sequence is MYSTSNRRGRSQTQRG. Residues 1 to 46 form a disordered region; the sequence is MYSTSNRRGRSQTQRGSHVRRTGVKRSYGAARGDDRRRPNVVSKTQ. The Bipartite nuclear localization signal signature appears at 21–42; it reads RTGVKRSYGAARGDDRRRPNVV. A Nuclear localization signal motif is present at residues 81 to 96; sequence SYVKTVPNRTRTYIKL. The segment at 150 to 187 is interaction with Arabidopsis thaliana NSI protein; it reads ELFGARIHCHGNLSVVPALKDRYYIRHVTKRVVSLEKD. Positions 177–198 match the Nuclear export signal motif; that stretch reads VTKRVVSLEKDTLLIDLHGTTQ.

The protein belongs to the begomovirus nuclear shuttle protein family. In terms of assembly, binds to single-stranded and double-stranded viral DNA. Interacts with the host nuclear shuttle interacting (NSI) protein. This interaction may allow NSP to recruit NSI monomers to the viral genome and thus regulate nuclear export of viral genome by NSP.

The protein localises to the host nucleus. Its subcellular location is the host cytoplasm. The protein resides in the host cell membrane. In terms of biological role, binds to the genomic viral ssDNA, shuttles it into and out of the cell nucleus. Begomoviruses use 2 proteins to transport their DNA from cell to cell. The nuclear shuttle protein (NSP) shuttles it between nucleus and cytoplasm and the movement protein (MP) probably transports the DNA-NSP complex to the cell periphery and facilitates movement across the cell wall. The polypeptide is Nuclear shuttle protein (Squash leaf curl virus (SLCV)).